We begin with the raw amino-acid sequence, 181 residues long: Ninjurin-B (181 aa).

The span at 1–10 (MDSGEVKISL) shows a compositional bias: basic and acidic residues. Residues 1 to 72 (MDSGEVKISL…SNKKCSSDLS (72 aa)) form a disordered region. The Extracellular segment spans residues 1-115 (MDSGEVKISL…YNDKASTYIY (115 aa)). The span at 12–26 (DSPSSGESFASTTSG) shows a compositional bias: polar residues. The segment covering 33 to 49 (RDLDIQVHESHIKDDQF) has biased composition (basic and acidic residues). The helix alpha1 stretch occupies residues 80 to 91 (NKNVAEGLMDIA). A helix alpha2 region spans residues 94 to 110 (SANANQLRFLITYNDKA). The helical transmembrane segment at 116–136 (SMIMVILSLVLQLLVGIMLIF) threads the bilayer. The Cytoplasmic segment spans residues 137–153 (KRRLKRFRNRSYERTND). Residues 154 to 174 (LLVMGVFMITVINILLAAFTT) traverse the membrane as a helical segment. Residues 175-181 (TDGGGSH) lie on the Extracellular side of the membrane.

The protein belongs to the ninjurin family.

It is found in the membrane. Functionally, effector of non-apoptotic necrotic cell death that mediates plasma membrane rupture (cytolysis): oligomerizes in response to death stimuli and promotes plasma membrane rupture by introducing hydrophilic faces of 2 alpha helices into the hydrophobic membrane, leading to release intracellular molecules that propagate the inflammatory response. Also acts as a homophilic transmembrane adhesion molecule that promotes cell adhesion by mediating homophilic interactions via its extracellular region. The polypeptide is Ninjurin-B (Drosophila melanogaster (Fruit fly)).